The sequence spans 396 residues: Beta-peptidyl aminopeptidase BapA (396 aa).

The N-terminal stretch at 1 to 21 (MHYLKFPAIIAGMLLAGAASA) is a signal peptide. Ser271 acts as the Nucleophile in catalysis. Residues Ser309 and Asp311 each act as proton donor/acceptor in the active site.

The protein belongs to the peptidase S58 family. As to quaternary structure, heterooctamer of 4 heterodimers ((alpha:beta)4); each heterodimer is composed of an alpha subunit and a beta subunit processed from the same precursor. Post-translationally, autoproteolytic processing to generate the alpha and beta subunit is required for self-activation and is proposed to use a similar mechanism as substrate cleavage.

It is found in the periplasm. It catalyses the reaction Cleaves N-terminal beta-homoamino acids from peptides composed of 2 to 6 amino acids.. Its activity is regulated as follows. Inhibited by AEBSF (4-(2-aminoethyl)benzenesulfonyl fluoride, Pefabloc SC). Its function is as follows. Beta-aminopeptidase that can cleave synthetic beta-peptides which consist of backbone-elongated beta-amino acid residues that are not processed by common proteolytic enzymes. Can cleave the beta-peptides beta-homoVal-beta-homoAla-beta-homoLeu and beta-homoAla-beta-homoLeu. Requires a beta-amino acid at the N-terminus of peptide substrates and cleaves the peptide bond between the N-terminal beta-amino acid and the amino acid at the second position of tripeptidic substrates of the general structure H-betahXaa-Ile-betahTyr-OH according to the following preferences with regard to the side chain of the N-terminal beta-amino acid: aliphatic and aromatic &gt; OH-containing &gt; hydrogen, basic and polar. beta-homoVal-beta-homoAla-beta-homoLeu and beta-homoAla-beta-homoLeu. The protein is Beta-peptidyl aminopeptidase BapA of Sphingosinicella microcystinivorans.